We begin with the raw amino-acid sequence, 271 residues long: Formamidopyrimidine-DNA glycosylase (271 aa).

P2 serves as the catalytic Schiff-base intermediate with DNA. E3 (proton donor) is an active-site residue. Residue K58 is the Proton donor; for beta-elimination activity of the active site. Positions 92, 111, and 152 each coordinate DNA. An FPG-type zinc finger spans residues 237 to 271 (FVYGREGEACKQCGRVLKHATIGQRATVWCGSCQR). The active-site Proton donor; for delta-elimination activity is R261.

This sequence belongs to the FPG family. In terms of assembly, monomer. Requires Zn(2+) as cofactor.

It carries out the reaction Hydrolysis of DNA containing ring-opened 7-methylguanine residues, releasing 2,6-diamino-4-hydroxy-5-(N-methyl)formamidopyrimidine.. The enzyme catalyses 2'-deoxyribonucleotide-(2'-deoxyribose 5'-phosphate)-2'-deoxyribonucleotide-DNA = a 3'-end 2'-deoxyribonucleotide-(2,3-dehydro-2,3-deoxyribose 5'-phosphate)-DNA + a 5'-end 5'-phospho-2'-deoxyribonucleoside-DNA + H(+). Its function is as follows. Involved in base excision repair of DNA damaged by oxidation or by mutagenic agents. Acts as a DNA glycosylase that recognizes and removes damaged bases. Has a preference for oxidized purines, such as 7,8-dihydro-8-oxoguanine (8-oxoG). Has AP (apurinic/apyrimidinic) lyase activity and introduces nicks in the DNA strand. Cleaves the DNA backbone by beta-delta elimination to generate a single-strand break at the site of the removed base with both 3'- and 5'-phosphates. The sequence is that of Formamidopyrimidine-DNA glycosylase from Xanthomonas axonopodis pv. citri (strain 306).